Reading from the N-terminus, the 199-residue chain is Biogenesis of lysosome-related organelles complex 1 subunit 3 (199 aa).

A compositionally biased stretch (basic residues) spans 1-11; the sequence is MASQSRRRRPL. The interval 1–81 is disordered; it reads MASQSRRRRP…AAPRDLPPLV (81 aa). A compositionally biased stretch (acidic residues) spans 23 to 38; sequence AETDSELSASSEEEEL. Residues 39 to 54 show a composition bias toward low complexity; the sequence is YLGPSGPTRGRPTGLR. Residue Thr-62 is modified to Phosphothreonine. Ser-64 carries the post-translational modification Phosphoserine.

Belongs to the BLOC1S3 family. In terms of assembly, component of the biogenesis of lysosome-related organelles complex 1 (BLOC-1) composed of BLOC1S1, BLOC1S2, BLOC1S3, BLOC1S4, BLOC1S5, BLOC1S6, DTNBP1/BLOC1S7 and SNAPIN/BLOC1S8. Octamer composed of one copy each BLOC1S1, BLOC1S2, BLOC1S3, BLOC1S4, BLOC1S5, BLOC1S6, DTNBP1/BLOC1S7 and SNAPIN/BLOC1S8. The BLOC-1 complex associates with the AP-3 protein complex and membrane protein cargos. Interacts directly with BLOC1S2. Interacts with BLOC1S4, BLOC1S5 and BLOC1S6. Phosphorylated.

Its subcellular location is the cytoplasm. In terms of biological role, component of the BLOC-1 complex, a complex that is required for normal biogenesis of lysosome-related organelles (LRO), such as platelet dense granules and melanosomes. In concert with the AP-3 complex, the BLOC-1 complex is required to target membrane protein cargos into vesicles assembled at cell bodies for delivery into neurites and nerve terminals. The BLOC-1 complex, in association with SNARE proteins, is also proposed to be involved in neurite extension. Plays a role in intracellular vesicle trafficking. In Sus scrofa (Pig), this protein is Biogenesis of lysosome-related organelles complex 1 subunit 3 (BLOC1S3).